Consider the following 389-residue polypeptide: Phosphatidylglycerol--prolipoprotein diacylglyceryl transferase (389 aa).

4 consecutive transmembrane segments (helical) span residues 28-48 (IIVA…LIYF), 58-78 (FFIF…YFLI), 98-118 (LAIQ…FNVF), and 148-168 (ISVF…QAIG). Arginine 169 serves as a coordination point for a 1,2-diacyl-sn-glycero-3-phospho-(1'-sn-glycerol). 3 helical membrane-spanning segments follow: residues 220-240 (IPLF…IYFV), 281-301 (IVFS…CQTL), and 309-329 (FWTY…TTLF).

The protein belongs to the Lgt family.

It localises to the cell membrane. It carries out the reaction L-cysteinyl-[prolipoprotein] + a 1,2-diacyl-sn-glycero-3-phospho-(1'-sn-glycerol) = an S-1,2-diacyl-sn-glyceryl-L-cysteinyl-[prolipoprotein] + sn-glycerol 1-phosphate + H(+). The protein operates within protein modification; lipoprotein biosynthesis (diacylglyceryl transfer). In terms of biological role, catalyzes the transfer of the diacylglyceryl group from phosphatidylglycerol to the sulfhydryl group of the N-terminal cysteine of a prolipoprotein, the first step in the formation of mature lipoproteins. This chain is Phosphatidylglycerol--prolipoprotein diacylglyceryl transferase, found in Mycoplasma pneumoniae (strain ATCC 29342 / M129 / Subtype 1) (Mycoplasmoides pneumoniae).